A 304-amino-acid chain; its full sequence is Aspartate carbamoyltransferase catalytic subunit (304 aa).

Carbamoyl phosphate is bound by residues Arg49 and Thr50. Lys77 is an L-aspartate binding site. Arg99, His127, and Gln130 together coordinate carbamoyl phosphate. Positions 160 and 211 each coordinate L-aspartate. Residues Ala250 and Pro251 each contribute to the carbamoyl phosphate site.

It belongs to the aspartate/ornithine carbamoyltransferase superfamily. ATCase family. In terms of assembly, heterododecamer (2C3:3R2) of six catalytic PyrB chains organized as two trimers (C3), and six regulatory PyrI chains organized as three dimers (R2).

The enzyme catalyses carbamoyl phosphate + L-aspartate = N-carbamoyl-L-aspartate + phosphate + H(+). It functions in the pathway pyrimidine metabolism; UMP biosynthesis via de novo pathway; (S)-dihydroorotate from bicarbonate: step 2/3. Catalyzes the condensation of carbamoyl phosphate and aspartate to form carbamoyl aspartate and inorganic phosphate, the committed step in the de novo pyrimidine nucleotide biosynthesis pathway. The sequence is that of Aspartate carbamoyltransferase catalytic subunit from Bacillus velezensis (strain DSM 23117 / BGSC 10A6 / LMG 26770 / FZB42) (Bacillus amyloliquefaciens subsp. plantarum).